The chain runs to 574 residues: Urease subunit alpha (574 aa).

The Urease domain maps to 131–574 (GAIDSHIHFI…LPMAQRYLLL (444 aa)). His-136, His-138, and Lys-219 together coordinate Ni(2+). Lys-219 is modified (N6-carboxylysine). Substrate is bound at residue His-221. Ni(2+) is bound by residues His-248 and His-274. His-322 serves as the catalytic Proton donor. Asp-362 is a binding site for Ni(2+). Residues 384–403 (KVQRGPLPEDAANPRGSRND) are disordered.

This sequence belongs to the metallo-dependent hydrolases superfamily. Urease alpha subunit family. As to quaternary structure, heterotrimer of UreA (gamma), UreB (beta) and UreC (alpha) subunits. Three heterotrimers associate to form the active enzyme. Ni cation is required as a cofactor. Post-translationally, carboxylation allows a single lysine to coordinate two nickel ions.

It localises to the cytoplasm. It carries out the reaction urea + 2 H2O + H(+) = hydrogencarbonate + 2 NH4(+). Its pathway is nitrogen metabolism; urea degradation; CO(2) and NH(3) from urea (urease route): step 1/1. The protein is Urease subunit alpha of Prochlorococcus marinus (strain MIT 9313).